Consider the following 290-residue polypeptide: Arylamine N-acetyltransferase, pineal gland isozyme NAT-3 (290 aa).

Cys-68 acts as the Acyl-thioester intermediate in catalysis. Residues His-107 and Asp-122 contribute to the active site.

This sequence belongs to the arylamine N-acetyltransferase family.

The catalysed reaction is an arylamine + acetyl-CoA = an N-acetylarylamine + CoA. It catalyses the reaction an N-hydroxyarylamine + acetyl-CoA = an N-acetoxyarylamine + CoA. Its function is as follows. Catalyzes the N- or O-acetylation of various arylamine and heterocyclic amine substrates, and participates in the detoxification of a plethora of hydrazine and arylamine drugs. The sequence is that of Arylamine N-acetyltransferase, pineal gland isozyme NAT-3 from Gallus gallus (Chicken).